Here is a 529-residue protein sequence, read N- to C-terminus: Autophagy-related protein 21 (529 aa).

Positions 49–62 (NSLEDSAGCQNPTH) are enriched in polar residues. Residues 49-70 (NSLEDSAGCQNPTHSKTDSQDT) are disordered. WD repeat units follow at residues 271–311 (AHHS…GKVK) and 321–361 (GHNL…SDIC). Positions 318–322 (LRRGH) match the L/FRRG motif motif. The disordered stretch occupies residues 362–388 (TNENSEDRTNHNSDYEDSDGDTSKSSE). Basic and acidic residues predominate over residues 366–375 (SEDRTNHNSD).

The protein belongs to the WD repeat PROPPIN family.

Its subcellular location is the cytoplasm. The protein localises to the membrane. It localises to the vacuole membrane. In terms of biological role, required for cytoplasm to vacuole transport (Cvt) vesicles formation and mitophagy. Involved in binding of phosphatidylethanolamine to ATG8 and in recruitment of ATG8 and ATG5 to the pre-autophagosomal structure. Protects ATG8 from ARG4-mediated cleavage. The protein is Autophagy-related protein 21 (ATG21) of Candida albicans (strain SC5314 / ATCC MYA-2876) (Yeast).